We begin with the raw amino-acid sequence, 160 residues long: Sec-independent protein translocase protein TatB (160 aa).

A helical transmembrane segment spans residues 1 to 21 (MFGMGFFEILVVLIVAIIFLG). A disordered region spans residues 118-160 (HLNEEVSNEEALNKEVSSDESPKEVQLTTDNNAKEHDKEKEHV). Basic and acidic residues-rich tracts occupy residues 128–140 (ALNKEVSSDESPK) and 149–160 (NAKEHDKEKEHV).

It belongs to the TatB family. As to quaternary structure, the Tat system comprises two distinct complexes: a TatABC complex, containing multiple copies of TatA, TatB and TatC subunits, and a separate TatA complex, containing only TatA subunits. Substrates initially bind to the TatABC complex, which probably triggers association of the separate TatA complex to form the active translocon.

Its subcellular location is the cell inner membrane. Part of the twin-arginine translocation (Tat) system that transports large folded proteins containing a characteristic twin-arginine motif in their signal peptide across membranes. Together with TatC, TatB is part of a receptor directly interacting with Tat signal peptides. TatB may form an oligomeric binding site that transiently accommodates folded Tat precursor proteins before their translocation. This is Sec-independent protein translocase protein TatB from Helicobacter pylori (strain J99 / ATCC 700824) (Campylobacter pylori J99).